The following is a 274-amino-acid chain: Dermonecrotic toxin SdSicTox-betaIIB1bvii (274 aa).

Residue H5 is part of the active site. The Mg(2+) site is built by E25 and D27. Residue H41 is the Nucleophile of the active site. Intrachain disulfides connect C45-C51 and C47-C190. D85 provides a ligand contact to Mg(2+).

This sequence belongs to the arthropod phospholipase D family. Class II subfamily. Requires Mg(2+) as cofactor. Expressed by the venom gland.

The protein localises to the secreted. The enzyme catalyses an N-(acyl)-sphingosylphosphocholine = an N-(acyl)-sphingosyl-1,3-cyclic phosphate + choline. It catalyses the reaction an N-(acyl)-sphingosylphosphoethanolamine = an N-(acyl)-sphingosyl-1,3-cyclic phosphate + ethanolamine. The catalysed reaction is a 1-acyl-sn-glycero-3-phosphocholine = a 1-acyl-sn-glycero-2,3-cyclic phosphate + choline. It carries out the reaction a 1-acyl-sn-glycero-3-phosphoethanolamine = a 1-acyl-sn-glycero-2,3-cyclic phosphate + ethanolamine. Its function is as follows. Dermonecrotic toxins cleave the phosphodiester linkage between the phosphate and headgroup of certain phospholipids (sphingolipid and lysolipid substrates), forming an alcohol (often choline) and a cyclic phosphate. This toxin acts on sphingomyelin (SM). It may also act on ceramide phosphoethanolamine (CPE), lysophosphatidylcholine (LPC) and lysophosphatidylethanolamine (LPE), but not on lysophosphatidylserine (LPS), and lysophosphatidylglycerol (LPG). It acts by transphosphatidylation, releasing exclusively cyclic phosphate products as second products. Induces dermonecrosis, hemolysis, increased vascular permeability, edema, inflammatory response, and platelet aggregation. The polypeptide is Dermonecrotic toxin SdSicTox-betaIIB1bvii (Sicarius cf. damarensis (strain GJB-2008) (Six-eyed sand spider)).